Consider the following 494-residue polypeptide: Cytochrome P450 2A4 (494 aa).

Ser-131 is modified (phosphoserine). Residue Lys-379 is modified to N6-acetyllysine. Cys-439 contributes to the heme binding site.

This sequence belongs to the cytochrome P450 family. Heme is required as a cofactor. In terms of tissue distribution, kidney and lung. Expressed in liver, with a strong circadian rhythmicity. Circadian expression is regulated by DBP.

It is found in the endoplasmic reticulum membrane. It localises to the microsome membrane. The enzyme catalyses an organic molecule + reduced [NADPH--hemoprotein reductase] + O2 = an alcohol + oxidized [NADPH--hemoprotein reductase] + H2O + H(+). In terms of biological role, highly active in the 15-alpha-hydroxylation of testosterone. Also active in the 15-alpha-hydroxylation of progesterone and androstenedione. Little or no activity on corticosterone, pregnenolone, dehydroepiandrosterone, estradiol or estriol. The polypeptide is Cytochrome P450 2A4 (Cyp2a4) (Mus musculus (Mouse)).